A 147-amino-acid polypeptide reads, in one-letter code: Probable flagellum biosynthesis repressor protein FlbT (147 aa).

The protein belongs to the FlbT family.

Its function is as follows. Has a post-transcriptional repressor function in flagellum biogenesis. Associates with the 5'-UTR of fljK mRNA and promotes its degradation. The sequence is that of Probable flagellum biosynthesis repressor protein FlbT from Mesorhizobium japonicum (strain LMG 29417 / CECT 9101 / MAFF 303099) (Mesorhizobium loti (strain MAFF 303099)).